We begin with the raw amino-acid sequence, 323 residues long: CIMIP2 protein CG18335 (323 aa).

This sequence belongs to the CIMIP2 family.

It is found in the cytoplasm. The protein localises to the cytoskeleton. Its subcellular location is the cilium axoneme. In terms of biological role, probable microtubule inner protein (MIP) part of the dynein-decorated doublet microtubules (DMTs) in cilium axoneme. This Drosophila melanogaster (Fruit fly) protein is CIMIP2 protein CG18335.